Here is a 166-residue protein sequence, read N- to C-terminus: Telethonin (166 aa).

Ser39 is subject to Phosphoserine. The segment at 145–166 is disordered; the sequence is VSKPGTLRRSLSRSMSQEAQRG. Residues 156–166 show a composition bias toward polar residues; sequence SRSMSQEAQRG.

In terms of assembly, interacts with MYOZ1, MYOZ2 and MYOZ3. Interacts with CSRP3. Interacts directly with the N-terminal Ig-like domains of 2 titin (TTN) molecules. Interacts with ANKRD2; the interaction is direct.

It localises to the cytoplasm. Its subcellular location is the myofibril. The protein resides in the sarcomere. Its function is as follows. Muscle assembly regulating factor. Mediates the antiparallel assembly of titin (TTN) molecules at the sarcomeric Z-disk. The polypeptide is Telethonin (TCAP) (Bos taurus (Bovine)).